The primary structure comprises 281 residues: Phosphatidylglycerol--prolipoprotein diacylglyceryl transferase (281 aa).

The next 4 membrane-spanning stretches (helical) occupy residues Phe-29–Ile-49, Leu-64–Tyr-84, Gly-100–Trp-120, and Leu-124–Gly-144. A 1,2-diacyl-sn-glycero-3-phospho-(1'-sn-glycerol) is bound at residue Arg-145. The next 3 membrane-spanning stretches (helical) occupy residues Gln-180–Trp-200, Gly-209–Phe-229, and Gly-248–Thr-268.

It belongs to the Lgt family.

The protein resides in the cell inner membrane. It catalyses the reaction L-cysteinyl-[prolipoprotein] + a 1,2-diacyl-sn-glycero-3-phospho-(1'-sn-glycerol) = an S-1,2-diacyl-sn-glyceryl-L-cysteinyl-[prolipoprotein] + sn-glycerol 1-phosphate + H(+). It participates in protein modification; lipoprotein biosynthesis (diacylglyceryl transfer). Catalyzes the transfer of the diacylglyceryl group from phosphatidylglycerol to the sulfhydryl group of the N-terminal cysteine of a prolipoprotein, the first step in the formation of mature lipoproteins. The sequence is that of Phosphatidylglycerol--prolipoprotein diacylglyceryl transferase from Erythrobacter litoralis (strain HTCC2594).